The primary structure comprises 205 residues: Small ribosomal subunit protein uS4 (205 aa).

Positions 1–12 (MSKRIQAKHKLD) are enriched in basic residues. The tract at residues 1 to 49 (MSKRIQAKHKLDRRMGQNIWGRPKSPVNRREYGPGQHGQRRKGKMSDFG) is disordered. Positions 94 to 155 (RRLDAVVYRA…SSRQLEIVIV (62 aa)) constitute an S4 RNA-binding domain.

Belongs to the universal ribosomal protein uS4 family. Part of the 30S ribosomal subunit. Contacts protein S5. The interaction surface between S4 and S5 is involved in control of translational fidelity.

Functionally, one of the primary rRNA binding proteins, it binds directly to 16S rRNA where it nucleates assembly of the body of the 30S subunit. With S5 and S12 plays an important role in translational accuracy. The protein is Small ribosomal subunit protein uS4 of Methylobacterium radiotolerans (strain ATCC 27329 / DSM 1819 / JCM 2831 / NBRC 15690 / NCIMB 10815 / 0-1).